Reading from the N-terminus, the 271-residue chain is MTYLQEASRNAVTVPKLQAMRDAGEKIAMLTCYDASFAALLDRAGVDVLLIGDSLGNVLQGQTTTLPVSLADIAYHTASVARARPAALIVADLPFGTYGTPEDAFRSSVELMRAGAQMVKLEGGEWLADTVRFLVERSIPVCAHVGLTPQSVHAFGGFKVQGKTEAGATQLLRDSLAVQAAGAQLIVMEAIPTLLASDATKQLRIPTIGIGAGLDCSGQVLVLHDMLGIFPGKRPRFVKDFMQGQPSILAAVEAYVAAVKDGSFPGPEHTF.

2 residues coordinate Mg(2+): Asp53 and Asp92. Residues 53–54 (DS), Asp92, and Lys120 each bind 3-methyl-2-oxobutanoate. A Mg(2+)-binding site is contributed by Glu122. Glu189 (proton acceptor) is an active-site residue.

The protein belongs to the PanB family. In terms of assembly, homodecamer; pentamer of dimers. Requires Mg(2+) as cofactor.

It localises to the cytoplasm. It catalyses the reaction 3-methyl-2-oxobutanoate + (6R)-5,10-methylene-5,6,7,8-tetrahydrofolate + H2O = 2-dehydropantoate + (6S)-5,6,7,8-tetrahydrofolate. The protein operates within cofactor biosynthesis; (R)-pantothenate biosynthesis; (R)-pantoate from 3-methyl-2-oxobutanoate: step 1/2. Catalyzes the reversible reaction in which hydroxymethyl group from 5,10-methylenetetrahydrofolate is transferred onto alpha-ketoisovalerate to form ketopantoate. The polypeptide is 3-methyl-2-oxobutanoate hydroxymethyltransferase (Paraburkholderia xenovorans (strain LB400)).